The sequence spans 108 residues: Cytochrome c (108 aa).

Residues C19, C22, H23, and M85 each contribute to the heme c site.

It belongs to the cytochrome c family. Binds 1 heme c group covalently per subunit.

It is found in the mitochondrion intermembrane space. Its function is as follows. Electron carrier protein. The oxidized form of the cytochrome c heme group can accept an electron from the heme group of the cytochrome c1 subunit of cytochrome reductase. Cytochrome c then transfers this electron to the cytochrome oxidase complex, the final protein carrier in the mitochondrial electron-transport chain. The sequence is that of Cytochrome c from Stellaria longipes (Longstalk starwort).